Here is a 252-residue protein sequence, read N- to C-terminus: Carbohydrate deacetylase (252 aa).

Mg(2+)-binding residues include H59 and H122.

This sequence belongs to the YdjC deacetylase family. As to quaternary structure, homodimer. The cofactor is Mg(2+).

Functionally, probably catalyzes the deacetylation of acetylated carbohydrates an important step in the degradation of oligosaccharides. The protein is Carbohydrate deacetylase of Vibrio cholerae serotype O1 (strain ATCC 39541 / Classical Ogawa 395 / O395).